The sequence spans 139 residues: ATP synthase epsilon chain (139 aa).

This sequence belongs to the ATPase epsilon chain family. In terms of assembly, F-type ATPases have 2 components, CF(1) - the catalytic core - and CF(0) - the membrane proton channel. CF(1) has five subunits: alpha(3), beta(3), gamma(1), delta(1), epsilon(1). CF(0) has three main subunits: a, b and c.

The protein resides in the cell inner membrane. Its function is as follows. Produces ATP from ADP in the presence of a proton gradient across the membrane. This chain is ATP synthase epsilon chain, found in Acinetobacter baylyi (strain ATCC 33305 / BD413 / ADP1).